The sequence spans 152 residues: MKLLVAAVGRWRGGPERALFDHYVGRLKGGLAVIEVEERRPLPVAERKAREAELLLAQLPPGAFVVALDEHGEAWGSERLARELDQRRLEARPAAVFAIGGADGHGEALLARADRKLALGVMTWPHMLVRGLIAEQLYRAQCISGGHPYHRS.

S-adenosyl-L-methionine contacts are provided by residues Leu68, Gly100, and 119–124; that span reads LGVMTW.

It belongs to the RNA methyltransferase RlmH family. As to quaternary structure, homodimer.

It localises to the cytoplasm. The enzyme catalyses pseudouridine(1915) in 23S rRNA + S-adenosyl-L-methionine = N(3)-methylpseudouridine(1915) in 23S rRNA + S-adenosyl-L-homocysteine + H(+). Specifically methylates the pseudouridine at position 1915 (m3Psi1915) in 23S rRNA. This Rhodospirillum rubrum (strain ATCC 11170 / ATH 1.1.1 / DSM 467 / LMG 4362 / NCIMB 8255 / S1) protein is Ribosomal RNA large subunit methyltransferase H.